A 44-amino-acid chain; its full sequence is Photosystem I reaction center subunit IX (44 aa).

Residues 7–27 (YLSVAPVLSTLWFGALAGLLI) traverse the membrane as a helical segment.

Belongs to the PsaJ family.

The protein localises to the plastid. It localises to the chloroplast thylakoid membrane. In terms of biological role, may help in the organization of the PsaE and PsaF subunits. This chain is Photosystem I reaction center subunit IX, found in Oryza nivara (Indian wild rice).